The chain runs to 624 residues: Carbon monoxide dehydrogenase (624 aa).

Residues Cys37, Cys46, Cys49, Cys54, and Cys65 each coordinate [4Fe-4S] cluster. Residues His256, Cys292, Cys336, Cys444, Cys475, and Cys516 each coordinate [Ni-4Fe-5S] cluster.

It belongs to the Ni-containing carbon monoxide dehydrogenase family. In terms of assembly, homodimer. The cofactor is [4Fe-4S] cluster. [Ni-4Fe-5S] cluster is required as a cofactor.

The enzyme catalyses CO + 2 oxidized [2Fe-2S]-[ferredoxin] + H2O = 2 reduced [2Fe-2S]-[ferredoxin] + CO2 + 2 H(+). In terms of biological role, CODH oxidizes carbon monoxide coupled, via CooF, to the reduction of a hydrogen cation by a hydrogenase (possibly CooH). The polypeptide is Carbon monoxide dehydrogenase (cooS) (Methanocaldococcus jannaschii (strain ATCC 43067 / DSM 2661 / JAL-1 / JCM 10045 / NBRC 100440) (Methanococcus jannaschii)).